We begin with the raw amino-acid sequence, 158 residues long: Sec-independent protein translocase protein TatB (158 aa).

A helical membrane pass occupies residues 1 to 21; the sequence is MFDIGWSELLVIGVVALVVVG. Residues 73-158 form a disordered region; it reads RSMGLDAMKQ…PAPAEPKSNA (86 aa). Over residues 83–92 the composition is skewed to basic and acidic residues; sequence AADRFEKWDP. Low complexity-rich tracts occupy residues 94-132 and 138-158; these read KPQQ…SEPA and APAA…KSNA.

The protein belongs to the TatB family. In terms of assembly, the Tat system comprises two distinct complexes: a TatABC complex, containing multiple copies of TatA, TatB and TatC subunits, and a separate TatA complex, containing only TatA subunits. Substrates initially bind to the TatABC complex, which probably triggers association of the separate TatA complex to form the active translocon.

It is found in the cell inner membrane. Functionally, part of the twin-arginine translocation (Tat) system that transports large folded proteins containing a characteristic twin-arginine motif in their signal peptide across membranes. Together with TatC, TatB is part of a receptor directly interacting with Tat signal peptides. TatB may form an oligomeric binding site that transiently accommodates folded Tat precursor proteins before their translocation. This Cereibacter sphaeroides (strain ATCC 17029 / ATH 2.4.9) (Rhodobacter sphaeroides) protein is Sec-independent protein translocase protein TatB.